We begin with the raw amino-acid sequence, 349 residues long: Phosphate acyltransferase (349 aa).

Belongs to the PlsX family. Homodimer. Probably interacts with PlsY.

The protein resides in the cytoplasm. The enzyme catalyses a fatty acyl-[ACP] + phosphate = an acyl phosphate + holo-[ACP]. It functions in the pathway lipid metabolism; phospholipid metabolism. Functionally, catalyzes the reversible formation of acyl-phosphate (acyl-PO(4)) from acyl-[acyl-carrier-protein] (acyl-ACP). This enzyme utilizes acyl-ACP as fatty acyl donor, but not acyl-CoA. This chain is Phosphate acyltransferase, found in Albidiferax ferrireducens (strain ATCC BAA-621 / DSM 15236 / T118) (Rhodoferax ferrireducens).